The primary structure comprises 275 residues: Protein unc-50 homolog (275 aa).

The span at 1 to 26 (MTQYSHVKYTQSPTPSVVSGYSSASR) shows a compositional bias: polar residues. Residues 1–39 (MTQYSHVKYTQSPTPSVVSGYSSASRLHSPLPPPANHRR) are disordered. At 1 to 99 (MTQYSHVKYT…TKSQFARDDP (99 aa)) the chain is on the cytoplasmic side. A helical transmembrane segment spans residues 100 to 120 (AFLVLLVVCLCVTSLGFAYVL). Residues 121-129 (GLSFWQSIS) are Lumenal-facing. Residues 130-150 (FIFYVVFVDCIFVGIIIASFF) form a helical membrane-spanning segment. The Cytoplasmic segment spans residues 151–178 (WAVTNRYLRTNSLEPDIEWGYAFDVHLN). The helical transmembrane segment at 179-199 (AFFPPLMLLHFIQLFFYNWLI) threads the bilayer. At 200 to 207 (SQTWFISR) the chain is on the lumenal side. Residues 208–228 (FLGNTFWLMGMGYYVYITFLG) traverse the membrane as a helical segment. Residues 229 to 239 (YNCIPHLKNTR) lie on the Cytoplasmic side of the membrane. A helical membrane pass occupies residues 240–260 (IILIALPIIFLLFLVVTIIGW). The Lumenal portion of the chain corresponds to 261 to 275 (NATISFVNFYKYRVY).

The protein belongs to the unc-50 family.

It localises to the golgi apparatus membrane. Functionally, required for cell surface expression of acetylcholine receptors. This Drosophila melanogaster (Fruit fly) protein is Protein unc-50 homolog.